Consider the following 333-residue polypeptide: Late embryogenesis abundant protein 1 (333 aa).

2 disordered regions span residues 1 to 20 (MASR…RRAA) and 116 to 246 (KDYT…GQGQ). A coiled-coil region spans residues 3–52 (SRQDRREARAEADARRAAEEIARARDERVMQAEVDARSAADEIARARADR). 3 stretches are compositionally biased toward basic and acidic residues: residues 116 to 163 (KDYT…KDAV), 172 to 219 (EATK…DATK), and 227 to 241 (DKAR…DATD).

Belongs to the LEA type 4 family.

The sequence is that of Late embryogenesis abundant protein 1 (LEA1) from Oryza sativa subsp. indica (Rice).